The primary structure comprises 570 residues: Urease subunit alpha 1 (570 aa).

The 440-residue stretch at 131-570 folds into the Urease domain; that stretch reads GGIDTHVHFI…VPMAQRYFLF (440 aa). Ni(2+)-binding residues include His-136, His-138, and Lys-219. Position 219 is an N6-carboxylysine (Lys-219). His-221 contacts substrate. Residues His-248 and His-274 each contribute to the Ni(2+) site. The active-site Proton donor is the His-322. Asp-362 serves as a coordination point for Ni(2+).

Belongs to the metallo-dependent hydrolases superfamily. Urease alpha subunit family. Heterotrimer of UreA (gamma), UreB (beta) and UreC (alpha) subunits. Three heterotrimers associate to form the active enzyme. It depends on Ni cation as a cofactor. In terms of processing, carboxylation allows a single lysine to coordinate two nickel ions.

Its subcellular location is the cytoplasm. It catalyses the reaction urea + 2 H2O + H(+) = hydrogencarbonate + 2 NH4(+). It participates in nitrogen metabolism; urea degradation; CO(2) and NH(3) from urea (urease route): step 1/1. Its function is as follows. May protect brucellae during their passage through the stomach. The major route of infection in human brucellosis is oral. The chain is Urease subunit alpha 1 from Brucella abortus (strain 2308).